The following is a 126-amino-acid chain: Small ribosomal subunit protein uS11 (126 aa).

The protein belongs to the universal ribosomal protein uS11 family. In terms of assembly, part of the 30S ribosomal subunit.

Located on the platform of the 30S subunit. The sequence is that of Small ribosomal subunit protein uS11 from Methanosarcina acetivorans (strain ATCC 35395 / DSM 2834 / JCM 12185 / C2A).